The chain runs to 677 residues: Methionine--tRNA ligase (677 aa).

Residues 15 to 25 (PYANGSIHLGH) carry the 'HIGH' region motif. Zn(2+)-binding residues include Cys146, Cys149, Cys159, and Cys162. A 'KMSKS' region motif is present at residues 333 to 337 (KMSKS). Position 336 (Lys336) interacts with ATP. One can recognise a tRNA-binding domain in the interval 575-677 (DFAKVDLRVA…AGAKPGHQVK (103 aa)).

This sequence belongs to the class-I aminoacyl-tRNA synthetase family. MetG type 1 subfamily. Homodimer. Zn(2+) is required as a cofactor.

The protein resides in the cytoplasm. It catalyses the reaction tRNA(Met) + L-methionine + ATP = L-methionyl-tRNA(Met) + AMP + diphosphate. Functionally, is required not only for elongation of protein synthesis but also for the initiation of all mRNA translation through initiator tRNA(fMet) aminoacylation. In Escherichia coli (strain UTI89 / UPEC), this protein is Methionine--tRNA ligase.